Consider the following 815-residue polypeptide: Dual specificity tyrosine-phosphorylation-regulated kinase mbk-2 (815 aa).

Disordered stretches follow at residues M1–R49, P67–T146, Y185–H204, and A298–E395. Composition is skewed to polar residues over residues F7–G25 and S40–R49. Low complexity predominate over residues S68–S78. Polar residues-rich tracts occupy residues S119–L140 and G190–H204. Over residues S301–G316 the composition is skewed to low complexity. The segment covering L325–D351 has biased composition (polar residues). S361 bears the Phosphoserine; by cdk-1 mark. Residues S363 to G391 are compositionally biased toward low complexity. Positions Y460–L773 constitute a Protein kinase domain. Residues I466–V474 and K489 contribute to the ATP site. D586 acts as the Proton acceptor in catalysis. Y620 is subject to Phosphotyrosine; by autocatalysis.

This sequence belongs to the protein kinase superfamily. CMGC Ser/Thr protein kinase family. MNB/DYRK subfamily. In terms of assembly, part of a complex, consisting of pseudophosphatases egg-3, egg-4, egg-5 and kinase mbk-2. Interacts (via Tyr-618 and Tyr-620) with egg-4 (via tyrosine-protein phosphatase domain) and egg-5 (via tyrosine-protein phosphatase domain); mbk-2 tyrosine phosphorylation enhances the interaction. The interaction inhibits mbk-2 kinase activity and is required for mbk-2 oocyte cortex localization. Interacts (via N-terminus) with egg-3 (via tyrosine-protein phosphatase domain); the interaction does not affect mbk-2 kinase activity, is enhanced by mbk-2 tyrosine phosphorylation status and requires prior binding of mbk-2 to egg-4 and egg-5. Mg(2+) is required as a cofactor. Post-translationally, autophosphorylated.

The protein localises to the cytoplasm. Its subcellular location is the cell cortex. It carries out the reaction L-seryl-[protein] + ATP = O-phospho-L-seryl-[protein] + ADP + H(+). It catalyses the reaction L-threonyl-[protein] + ATP = O-phospho-L-threonyl-[protein] + ADP + H(+). The enzyme catalyses L-tyrosyl-[protein] + ATP = O-phospho-L-tyrosyl-[protein] + ADP + H(+). Its activity is regulated as follows. Activated during oocyte maturation by phosphorylation on Ser-361 by cdk-1. The pseudotyrosine phosphatases egg-4 and egg-5 sequester activated mbk-2 until the meiotic divisions and inhibit mbk-2 kinase activity directly, using a mixed-inhibition mechanism that does not involve tyrosine dephosphorylation. Its function is as follows. Required for oocyte-to-zygote transition in which it phosphorylates oocyte proteins, including mei-1, oma-1, oma-2, mex-5, and mex-6, modifying their activity and/or stability following meiosis. Through phosphorylation of P granule components including meg-1, promotes the disassembly of zygotic P granules in the anterior cytoplasm during zygote polarization, and thus plays a role in P granule distribution and segregation in early stage embryos following meiosis. Functions in both spindle positioning and in the posterior localization of cytoplasmic determinants, including pie-1, pos-1, and pgl-1, in early embryos. Involved in the asymmetric distribution of plk-1 at the 2-cell embryonic stage. The polypeptide is Dual specificity tyrosine-phosphorylation-regulated kinase mbk-2 (Caenorhabditis briggsae).